Consider the following 202-residue polypeptide: MNFRIFDKIGNSYKKSLQNRPVITKSLTGTVVFFLGDTLAQKIENRGYDPKRTLMMCTVGTFIVVPQIHFWFKFLDKTFTKPGWAGAIPKVVVDQLTFGPYLFVCNMTSVQLFHQGFNFDTHQWKDKMKKDFFPVLQKAWMIWPLTNCILFRFVHPDYRILISNLVSVGWNCILSTVSNKSFLKNNNNNNDPSISTMASLNE.

4 helical membrane passes run 21-41 (PVITKSLTGTVVFFLGDTLAQ), 54-72 (LMMCTVGTFIVVPQIHFWF), 138-154 (KAWMIWPLTNCILFRFV), and 161-177 (LISNLVSVGWNCILSTV).

Belongs to the peroxisomal membrane protein PXMP2/4 family.

It is found in the membrane. In Dictyostelium discoideum (Social amoeba), this protein is PXMP2/4 family protein 1.